The following is a 300-amino-acid chain: Small ribosomal subunit protein uS2 (300 aa).

The disordered stretch occupies residues 269 to 300 (WEADGADWAASSAAAPAESWAAEAQGAEGAKW).

This sequence belongs to the universal ribosomal protein uS2 family. As to quaternary structure, component of the small ribosomal subunit. Mature ribosomes consist of a small (40S) and a large (60S) subunit. The 40S subunit contains about 33 different proteins and 1 molecule of RNA (18S). The 60S subunit contains about 49 different proteins and 3 molecules of RNA (25S, 5.8S and 5S). Interacts with rps21.

The protein localises to the cytoplasm. Functionally, required for the assembly and/or stability of the 40S ribosomal subunit. Required for the processing of the 20S rRNA-precursor to mature 18S rRNA in a late step of the maturation of 40S ribosomal subunits. The protein is Small ribosomal subunit protein uS2 (rps0) of Aspergillus terreus (strain NIH 2624 / FGSC A1156).